Reading from the N-terminus, the 72-residue chain is Large ribosomal subunit protein bL31c (72 aa).

Belongs to the bacterial ribosomal protein bL31 family. Type A subfamily. As to quaternary structure, part of the 50S ribosomal subunit.

The protein localises to the plastid. It is found in the chloroplast. Its function is as follows. Binds the 23S rRNA. This is Large ribosomal subunit protein bL31c (rpl31) from Thalassiosira pseudonana (Marine diatom).